Here is a 122-residue protein sequence, read N- to C-terminus: Phospholipase A2 nigroviriditoxin basic subunit B (122 aa).

Disulfide bonds link Cys26/Cys115, Cys28/Cys44, Cys43/Cys95, Cys49/Cys122, Cys50/Cys88, Cys57/Cys81, and Cys75/Cys86. Ca(2+) contacts are provided by Tyr27, Gly29, and Gly31. His47 is a catalytic residue. Asp48 contributes to the Ca(2+) binding site. Asp89 is an active-site residue.

This sequence belongs to the phospholipase A2 family. Group II subfamily. D49 sub-subfamily. As to quaternary structure, nigroviriditoxin is a heterodimer of an acidic subunit A and a basic subunit B. Ca(2+) is required as a cofactor. As to expression, expressed by the venom gland.

It is found in the secreted. The catalysed reaction is a 1,2-diacyl-sn-glycero-3-phosphocholine + H2O = a 1-acyl-sn-glycero-3-phosphocholine + a fatty acid + H(+). Its function is as follows. Heterodimer A-B: Nigroviriditoxin possesses phospholipase A2 (PLA2) activity. It consists of a non-covalent association of a basic PLA2 subunit B with a non-enzymatic subunit A. Functionally, subunit B: Snake venom phospholipase A2 (PLA2) that induces myonecrosis in mice. PLA2 catalyzes the calcium-dependent hydrolysis of the 2-acyl groups in 3-sn-phosphoglycerides. The protein is Phospholipase A2 nigroviriditoxin basic subunit B of Bothriechis nigroviridis (Black-speckled palm pit viper).